The chain runs to 127 residues: Protein chibby homolog 1 (127 aa).

Residues 1 to 25 (MPLFGSIFSPKKTPPRKSASLSNLH) form a disordered region. A phosphoserine mark is found at S9 and S20. Positions 60 to 112 (VADSVISGGVDRRETQRLRKRNQQLEEENNLLRLKVDILLDMLSETTAESHLK) are minimal region for the interaction with PKD2. Positions 68–110 (GVDRRETQRLRKRNQQLEEENNLLRLKVDILLDMLSETTAESH) form a coiled coil. Residues 77-98 (LRKRNQQLEEENNLLRLKVDIL) are leucine-zipper; mediates homodimerization.

This sequence belongs to the chibby family. In terms of assembly, homodimer. Homodimerization is essential for nuclear localization and interaction with KPNA4 but is dispensable for interaction with CTNNB1. Interacts with polycystin-2/PKD2 and GM130. Interacts with the C-terminal region of CTNNB1. Interacts (C-terminus) with TCIM (C-terminus), TCIM competes with CTNNB1 for the interaction with CBY1. Interacts with FAM92A; this interaction facilitates targeting of FAM92A to cilium basal body. Interacts with CIBAR2. Interacts with KPNA4. As to expression, found in heart, brain, lung, liver, muscle, kidney and testis. Levels are approximately 3-fold higher in embryonic and adult heart than in lung or liver.

Its subcellular location is the nucleus speckle. The protein resides in the cytoplasm. The protein localises to the cytoskeleton. It is found in the cilium basal body. It localises to the microtubule organizing center. Its subcellular location is the centrosome. The protein resides in the centriole. The protein localises to the golgi apparatus. It is found in the trans-Golgi network. It localises to the cell projection. Its subcellular location is the cilium. The protein resides in the flagellum. The protein localises to the nucleus. In terms of biological role, inhibits the Wnt/Wingless pathway by binding to CTNNB1/beta-catenin and inhibiting beta-catenin-mediated transcriptional activation through competition with TCF/LEF transcription factors. Has also been shown to play a role in regulating the intracellular trafficking of polycystin-2/PKD2 and possibly of other intracellular proteins. Promotes adipocyte and cardiomyocyte differentiation. The chain is Protein chibby homolog 1 (Cby1) from Mus musculus (Mouse).